The chain runs to 219 residues: MAEVNANMVKELREKTGAGMMDCKKALAEAGGDFAKAEEVLRKKGLAAAAKKSSRAATEGQVASYIHMGGKIGVLVEVNCETDFVARTDGFQALVKDIAMQIAAAAPQWVRRDEVPADVVAKELEIAKAQMRDQKKPEAILEKIAQGKLEKFYEQFCLLDQPFVKEDKKKMSEVLTDAVAKIGENIQVRRFARFVLGEGLEKKQENLAEEVAKAAGLQK.

An involved in Mg(2+) ion dislocation from EF-Tu region spans residues 82 to 85; sequence TDFV.

The protein belongs to the EF-Ts family.

Its subcellular location is the cytoplasm. Associates with the EF-Tu.GDP complex and induces the exchange of GDP to GTP. It remains bound to the aminoacyl-tRNA.EF-Tu.GTP complex up to the GTP hydrolysis stage on the ribosome. The protein is Elongation factor Ts of Anaeromyxobacter sp. (strain Fw109-5).